The primary structure comprises 295 residues: CBY1-interacting BAR domain-containing protein 1 (295 aa).

A mitochondrion-targeting transit peptide spans 1–49; that stretch reads MMSRTPDARARDTQTKQIQENITSVEKHFGDLCQLFAAYVRKTARLRDK. Residues 12–222 form a BAR-like region; it reads DTQTKQIQEN…NVDEEGDLEV (211 aa). Residues 111 to 185 adopt a coiled-coil conformation; the sequence is KREDLKQTQS…KQKIRDIKKV (75 aa). Positions 243–265 are enriched in polar residues; that stretch reads SKLSLNRTGTSMSKSGTMQSRTS. The disordered stretch occupies residues 243–295; that stretch reads SKLSLNRTGTSMSKSGTMQSRTSSRQRKRDDEEDEEEDDEDEDDLEEVTDDEH. A compositionally biased stretch (acidic residues) spans 273–295; that stretch reads DEEDEEEDDEDEDDLEEVTDDEH.

Belongs to the CIBAR family.

The protein resides in the cytoplasm. The protein localises to the cytoskeleton. It is found in the microtubule organizing center. Its subcellular location is the centrosome. It localises to the centriole. The protein resides in the cell projection. The protein localises to the cilium. It is found in the nucleus. Its subcellular location is the mitochondrion inner membrane. It localises to the flagellum. In terms of biological role, plays a critical role in regulating mitochondrial ultrastructure and function by maintaining the integrity of mitochondrial morphology, particularly the organization of cristae. Plays a crucial role in ciliogenesis. Plays a key role in the correct positioning of the annulus, a septin-based ring structure in the sperm flagellum, serving both as a physical barrier and a membrane diffusion barrier that separates the midpiece (MP) from the principal piece (PP). This chain is CBY1-interacting BAR domain-containing protein 1 (cibar1), found in Danio rerio (Zebrafish).